The chain runs to 136 residues: Histone H3-like 3 (136 aa).

Residues 1–15 (MARTKQTARKSHGGK) are compositionally biased toward basic residues. A disordered region spans residues 1–42 (MARTKQTARKSHGGKAPRTLLATKAARKSAPTTGGVKKPHRY). An N6,N6,N6-trimethyllysine; alternate mark is found at lysine 5 and lysine 10. N6,N6-dimethyllysine; alternate occurs at positions 5 and 10. An N6-methyllysine; alternate mark is found at lysine 5 and lysine 10. Lysine 10 is subject to N6-acetyllysine; alternate. Phosphoserine is present on serine 11. At lysine 15 the chain carries N6-acetyllysine. 2 positions are modified to N6-methyllysine; alternate: lysine 24 and lysine 28. Lysine 24 is modified (N6-acetyllysine; alternate). Lysine 28 carries the N6,N6,N6-trimethyllysine; alternate modification. Lysine 28 is subject to N6,N6-dimethyllysine; alternate. Position 29 is a phosphoserine (serine 29). Lysine 37 carries the post-translational modification N6,N6,N6-trimethyllysine; alternate. Lysine 37 is subject to N6,N6-dimethyllysine; alternate. Lysine 37 carries the post-translational modification N6-methyllysine; alternate.

The protein belongs to the histone H3 family. The nucleosome is a histone octamer containing two molecules each of H2A, H2B, H3 and H4 assembled in one H3-H4 heterotetramer and two H2A-H2B heterodimers. The octamer wraps approximately 147 bp of DNA. In terms of tissue distribution, expressed in roots, seedlings, leaves and open flowers.

It localises to the nucleus. It is found in the chromosome. In terms of biological role, core component of nucleosome. Nucleosomes wrap and compact DNA into chromatin, limiting DNA accessibility to the cellular machineries which require DNA as a template. Histones thereby play a central role in transcription regulation, DNA repair, DNA replication and chromosomal stability. DNA accessibility is regulated via a complex set of post-translational modifications of histones, also called histone code, and nucleosome remodeling. In Arabidopsis thaliana (Mouse-ear cress), this protein is Histone H3-like 3.